A 602-amino-acid polypeptide reads, in one-letter code: Aspartate--tRNA(Asp/Asn) ligase (602 aa).

Residue Glu-191 participates in L-aspartate binding. The interval 215-218 (QLYK) is aspartate. Arg-237 lines the L-aspartate pocket. ATP is bound by residues 237–239 (RDE) and Gln-246. His-465 provides a ligand contact to L-aspartate. Residue Glu-499 participates in ATP binding. Residue Arg-506 participates in L-aspartate binding. 551-554 (GLDR) contributes to the ATP binding site.

Belongs to the class-II aminoacyl-tRNA synthetase family. Type 1 subfamily. In terms of assembly, homodimer.

It localises to the cytoplasm. The catalysed reaction is tRNA(Asx) + L-aspartate + ATP = L-aspartyl-tRNA(Asx) + AMP + diphosphate. Functionally, aspartyl-tRNA synthetase with relaxed tRNA specificity since it is able to aspartylate not only its cognate tRNA(Asp) but also tRNA(Asn). Reaction proceeds in two steps: L-aspartate is first activated by ATP to form Asp-AMP and then transferred to the acceptor end of tRNA(Asp/Asn). This is Aspartate--tRNA(Asp/Asn) ligase from Treponema pallidum (strain Nichols).